We begin with the raw amino-acid sequence, 349 residues long: Hydroxymethylglutaryl-CoA synthase (349 aa).

(3S)-3-hydroxy-3-methylglutaryl-CoA-binding residues include D29 and A30. The active-site Proton donor/acceptor is E81. (3S)-3-hydroxy-3-methylglutaryl-CoA contacts are provided by C113 and T154. C113 acts as the Acyl-thioester intermediate in catalysis. R202 is a CoA binding site. (3S)-3-hydroxy-3-methylglutaryl-CoA is bound by residues T204 and H237. H237 serves as the catalytic Proton donor/acceptor. K242 is a binding site for CoA. Residues R246, N269, and S299 each contribute to the (3S)-3-hydroxy-3-methylglutaryl-CoA site.

The protein belongs to the thiolase-like superfamily. Archaeal HMG-CoA synthase family. Interacts with acetoacetyl-CoA thiolase that catalyzes the precedent step in the pathway and with a DUF35 protein. The acetoacetyl-CoA thiolase/HMG-CoA synthase complex channels the intermediate via a fused CoA-binding site, which allows for efficient coupling of the endergonic thiolase reaction with the exergonic HMGCS reaction.

The enzyme catalyses acetoacetyl-CoA + acetyl-CoA + H2O = (3S)-3-hydroxy-3-methylglutaryl-CoA + CoA + H(+). The protein operates within metabolic intermediate biosynthesis; (R)-mevalonate biosynthesis; (R)-mevalonate from acetyl-CoA: step 2/3. In terms of biological role, catalyzes the condensation of acetyl-CoA with acetoacetyl-CoA to form 3-hydroxy-3-methylglutaryl-CoA (HMG-CoA). Functions in the mevalonate (MVA) pathway leading to isopentenyl diphosphate (IPP), a key precursor for the biosynthesis of isoprenoid compounds that are building blocks of archaeal membrane lipids. The polypeptide is Hydroxymethylglutaryl-CoA synthase (Methanococcoides burtonii (strain DSM 6242 / NBRC 107633 / OCM 468 / ACE-M)).